A 986-amino-acid chain; its full sequence is Ephrin type-A receptor 4 (986 aa).

The signal sequence occupies residues 1–19; the sequence is MAGVPVGALLPLLVGVCGA. Over 20 to 547 the chain is Extracellular; it reads VTGSRVYPAN…PIIGDGTNPT (528 aa). The Eph LBD domain occupies 30–209; sequence EVTLLDSRSV…FYKKCPLTVR (180 aa). N-linked (GlcNAc...) asparagine glycosylation is found at Asn-235, Asn-340, and Asn-408. Fibronectin type-III domains lie at 328–439 and 440–537; these read PPSA…TNQA and APSP…TVPS. A helical membrane pass occupies residues 548–569; sequence VLLVSVAGSVVLVVILIAAFVI. At 570–986 the chain is on the cytoplasmic side; it reads SRRRSKYSKA…QQMHGRMVPV (417 aa). Residues Tyr-596 and Tyr-602 each carry the phosphotyrosine; by autocatalysis modification. Positions 621–882 constitute a Protein kinase domain; the sequence is IKIEKVIGVG…QIVNMLDKLI (262 aa). Residues 627–635 and Lys-653 contribute to the ATP site; that span reads IGVGEFGEV. Residue Asp-746 is the Proton acceptor of the active site. Phosphotyrosine; by autocatalysis occurs at positions 779 and 928. The region spanning 911 to 975 is the SAM domain; sequence SAVVSVSDWL…LSSVQAMRSQ (65 aa). A PDZ-binding motif is present at residues 984–986; the sequence is VPV.

The protein belongs to the protein kinase superfamily. Tyr protein kinase family. Ephrin receptor subfamily. In terms of assembly, interacts with the src family kinase, p59-Fyn, through the major phosphorylation site at position Tyr-602. Interacts (via PDZ motif) with SIPA1L1 (via PDZ domain); controls neuronal morphology through regulation of the RAP1 (RAP1A or RAP1B) and RAP2 (RAP2A, RAP2B or RAP2C) GTPases. Expressed at high levels in brain, with expression also detected in the kidney, lung, muscle and thymus.

It localises to the cell membrane. It is found in the early endosome. It carries out the reaction L-tyrosyl-[protein] + ATP = O-phospho-L-tyrosyl-[protein] + ADP + H(+). In terms of biological role, receptor tyrosine kinase which binds membrane-bound ephrin family ligands residing on adjacent cells, leading to contact-dependent bidirectional signaling into neighboring cells. The signaling pathway downstream of the receptor is referred to as forward signaling while the signaling pathway downstream of the ephrin ligand is referred to as reverse signaling. Highly promiscuous, it has the unique property among Eph receptors to bind and to be physiologically activated by both GPI-anchored ephrin-A and transmembrane ephrin-B ligands including EFNA1 and EFNB3. Upon activation by ephrin ligands, modulates cell morphology and integrin-dependent cell adhesion through regulation of the Rac, Rap and Rho GTPases activity. Plays an important role in the development of the nervous system controlling different steps of axonal guidance including the establishment of the corticospinal projections. The chain is Ephrin type-A receptor 4 (EPHA4) from Gallus gallus (Chicken).